A 99-amino-acid polypeptide reads, in one-letter code: High mobility group protein I (99 aa).

Positions 1 to 99 are disordered; it reads MSDSPVKKGR…ADTEEVNSSD (99 aa). At serine 4 the chain carries Phosphoserine; by CDC2 and MAPK. Positions 7–19 form a DNA-binding region, a.T hook 1; sequence KKGRGRPAKAKPE. Residues 16–46 are compositionally biased toward basic and acidic residues; the sequence is AKPEETASPKAAKKEEKKVEEVPKKIEESTK. Serine 23 is modified (phosphoserine; by MAPK). A DNA-binding region (a.T hook 2) is located at residues 54–66; that stretch reads KKGRGRPSKGDKA. The residue at position 73 (serine 73) is a Phosphoserine; by PKC. The a.T hook 3 DNA-binding region spans 74–86; that stretch reads GKGRGRPAKNAKK. Positions 90–99 are enriched in acidic residues; that stretch reads ADTEEVNSSD.

The protein belongs to the HMGA family. Phosphorylated in a cell-cycle dependent manner; substantially reduced in cells that have finished proliferating and are differentiated. Phosphorylation at Ser-4 and Ser-23 results in a 10-fold weakening of DNA-binding activity and altered the mode of protein-DNA interaction.

It is found in the nucleus. Its subcellular location is the nucleolus. The protein localises to the chromosome. In terms of biological role, binds preferentially to the minor groove of A+T rich regions in double-stranded DNA via the second and third DBA-binding domains. It is suggested that these proteins could function in nucleosome phasing and in the 3'-end processing of mRNA transcripts. They are also involved in the transcription regulation of genes containing, or in close proximity to A+T-rich regions. This is High mobility group protein I from Chironomus tentans (Midge).